Reading from the N-terminus, the 227-residue chain is Ribonuclease 3 (227 aa).

In terms of domain architecture, RNase III spans 6–128 (ASDYQQRIGY…VIAAIYLDAD (123 aa)). A Mg(2+)-binding site is contributed by E41. The active site involves D45. Positions 114 and 117 each coordinate Mg(2+). E117 is an active-site residue. Positions 155-225 (DPKTRLQEWL…ASHAINQLDS (71 aa)) constitute a DRBM domain. Residues 203 to 212 (GEGSSRRLAE) are compositionally biased toward basic and acidic residues. Positions 203–227 (GEGSSRRLAEQDAASHAINQLDSNK) are disordered.

The protein belongs to the ribonuclease III family. In terms of assembly, homodimer. Mg(2+) serves as cofactor.

It localises to the cytoplasm. The enzyme catalyses Endonucleolytic cleavage to 5'-phosphomonoester.. Its function is as follows. Digests double-stranded RNA. Involved in the processing of primary rRNA transcript to yield the immediate precursors to the large and small rRNAs (23S and 16S). Processes some mRNAs, and tRNAs when they are encoded in the rRNA operon. Processes pre-crRNA and tracrRNA of type II CRISPR loci if present in the organism. The protein is Ribonuclease 3 of Xylella fastidiosa (strain M12).